Consider the following 477-residue polypeptide: RTX-III toxin determinant D (477 aa).

The Cytoplasmic portion of the chain corresponds to 1 to 59 (MKLWILGLGEFFQRYRNIWREIWKIRKQLDTPARQKDENEFLPRHLELIETPISKKPRL). A helical membrane pass occupies residues 60-77 (IAYLIMLFLFLAIVISII). The Periplasmic portion of the chain corresponds to 78-477 (SKVEIVASAT…ESITESLRER (400 aa)).

The protein belongs to the membrane fusion protein (MFP) (TC 8.A.1) family.

It is found in the cell inner membrane. Its function is as follows. Involved in the transport of the toxin RTX-III. The polypeptide is RTX-III toxin determinant D (apxIIID) (Actinobacillus pleuropneumoniae (Haemophilus pleuropneumoniae)).